The chain runs to 147 residues: Ribosomal RNA large subunit methyltransferase H (147 aa).

S-adenosyl-L-methionine is bound by residues L66, G95, and L114–F119.

Belongs to the RNA methyltransferase RlmH family. Homodimer.

Its subcellular location is the cytoplasm. It carries out the reaction pseudouridine(1915) in 23S rRNA + S-adenosyl-L-methionine = N(3)-methylpseudouridine(1915) in 23S rRNA + S-adenosyl-L-homocysteine + H(+). Its function is as follows. Specifically methylates the pseudouridine at position 1915 (m3Psi1915) in 23S rRNA. This is Ribosomal RNA large subunit methyltransferase H from Synechococcus sp. (strain RCC307).